Consider the following 225-residue polypeptide: E3 ubiquitin-protein ligase ATL59 (225 aa).

Residues 22–42 form a helical membrane-spanning segment; the sequence is FTFIVCVPICVILIVLLVLYI. The segment at 97 to 139 adopts an RING-type; atypical zinc-finger fold; it reads CSVCLGDYQAEEKLQQMPSCGHTFHMECIDLWLTSHTTCPLCR.

The protein belongs to the RING-type zinc finger family. ATL subfamily.

Its subcellular location is the membrane. It catalyses the reaction S-ubiquitinyl-[E2 ubiquitin-conjugating enzyme]-L-cysteine + [acceptor protein]-L-lysine = [E2 ubiquitin-conjugating enzyme]-L-cysteine + N(6)-ubiquitinyl-[acceptor protein]-L-lysine.. It participates in protein modification; protein ubiquitination. Its function is as follows. E3 ubiquitin-protein ligase able to catalyze polyubiquitination with ubiquitin-conjugating enzyme E2 UBC8, UBC10, UBC11, and UBC34 in vitro. The sequence is that of E3 ubiquitin-protein ligase ATL59 (ATL59) from Arabidopsis thaliana (Mouse-ear cress).